A 347-amino-acid chain; its full sequence is Probable cytosolic iron-sulfur protein assembly protein 1 (347 aa).

7 WD repeats span residues 11 to 48 (LHNE…DGLV), 62 to 101 (SHKK…GDAD), 122 to 161 (GHEN…EEYE), 168 to 207 (EHSQ…WEAA), 212 to 255 (GHEG…SIEE), 266 to 304 (VHGK…VWEV), and 311 to 347 (SHSI…WAYN).

This sequence belongs to the WD repeat CIA1 family. Interacts with NAR1.

It localises to the cytoplasm. The protein resides in the nucleus. Its function is as follows. Essential component of the cytosolic iron-sulfur (Fe/S) protein assembly machinery. Required for the maturation of extramitochondrial Fe/S proteins. This Vanderwaltozyma polyspora (strain ATCC 22028 / DSM 70294 / BCRC 21397 / CBS 2163 / NBRC 10782 / NRRL Y-8283 / UCD 57-17) (Kluyveromyces polysporus) protein is Probable cytosolic iron-sulfur protein assembly protein 1.